The chain runs to 593 residues: Inactive metallocarboxypeptidase ECM14 (593 aa).

An N-terminal signal peptide occupies residues 1–22; sequence MHVTVQLSLLLSLASSLPLVSA. Residues 23–175 constitute a propeptide that is removed on maturation; the sequence is IPQHDGQAYT…QAIYESYPKN (153 aa). Disordered regions lie at residues 75–98 and 172–202; these read VPQR…KAPA and YPKN…SQPH. Over residues 78 to 88 the composition is skewed to basic and acidic residues; the sequence is RGKDSETKTGK. A compositionally biased stretch (polar residues) spans 188–199; it reads RRFSPSASTPES. In terms of domain architecture, Peptidase M14 spans 211–537; sequence DYQPLSVLLP…HAVVAMGKFL (327 aa). Positions 276 and 279 each coordinate Zn(2+). Residues 276 to 279, arginine 334, and 351 to 352 each bind substrate; these read HARE and DR. Cysteine 345 and cysteine 368 are disulfide-bonded. Residue asparagine 361 is glycosylated (N-linked (GlcNAc...) asparagine). Histidine 408 provides a ligand contact to Zn(2+). Residue 409–410 participates in substrate binding; it reads SY. The tract at residues 548–593 is disordered; it reads DEPHAGEQTQDNSYDEDGDNLFRAQGGDPQVRFTRRNIGAHDDDSE.

It belongs to the peptidase M14 family. Zn(2+) serves as cofactor.

It localises to the vacuole. It is found in the secreted. In terms of biological role, inactive carboxypeptidase that may play a role in cell wall organization and biogenesis. This is Inactive metallocarboxypeptidase ECM14 (ECM14) from Arthroderma otae (strain ATCC MYA-4605 / CBS 113480) (Microsporum canis).